A 587-amino-acid polypeptide reads, in one-letter code: Arginine--tRNA ligase (587 aa).

Positions 127–137 (PNLAKEMHVGH) match the 'HIGH' region motif.

Belongs to the class-I aminoacyl-tRNA synthetase family. In terms of assembly, monomer.

The protein localises to the cytoplasm. It catalyses the reaction tRNA(Arg) + L-arginine + ATP = L-arginyl-tRNA(Arg) + AMP + diphosphate. This is Arginine--tRNA ligase from Pseudomonas aeruginosa (strain ATCC 15692 / DSM 22644 / CIP 104116 / JCM 14847 / LMG 12228 / 1C / PRS 101 / PAO1).